A 131-amino-acid polypeptide reads, in one-letter code: Translation initiation factor 5A (131 aa).

K37 carries the post-translational modification Hypusine.

The protein belongs to the eIF-5A family.

It localises to the cytoplasm. Functions by promoting the formation of the first peptide bond. This Methanococcus maripaludis (strain C7 / ATCC BAA-1331) protein is Translation initiation factor 5A (eIF5A).